The sequence spans 342 residues: Ketol-acid reductoisomerase (NADP(+)) (342 aa).

The KARI N-terminal Rossmann domain maps to 2-182; the sequence is AKIYYDDDAD…GGLRAGGIET (181 aa). Residues 25-28, R48, S51, S53, and 83-86 each bind NADP(+); these read YGSQ and DQNQ. H108 is a catalytic residue. G134 is an NADP(+) binding site. Positions 183–328 constitute a KARI C-terminal knotted domain; it reads SFREETETDL…KELRKMYSWL (146 aa). Residues D191, E195, E227, and E231 each contribute to the Mg(2+) site. S252 contacts substrate.

It belongs to the ketol-acid reductoisomerase family. Requires Mg(2+) as cofactor.

The enzyme catalyses (2R)-2,3-dihydroxy-3-methylbutanoate + NADP(+) = (2S)-2-acetolactate + NADPH + H(+). It carries out the reaction (2R,3R)-2,3-dihydroxy-3-methylpentanoate + NADP(+) = (S)-2-ethyl-2-hydroxy-3-oxobutanoate + NADPH + H(+). It functions in the pathway amino-acid biosynthesis; L-isoleucine biosynthesis; L-isoleucine from 2-oxobutanoate: step 2/4. The protein operates within amino-acid biosynthesis; L-valine biosynthesis; L-valine from pyruvate: step 2/4. Involved in the biosynthesis of branched-chain amino acids (BCAA). Catalyzes an alkyl-migration followed by a ketol-acid reduction of (S)-2-acetolactate (S2AL) to yield (R)-2,3-dihydroxy-isovalerate. In the isomerase reaction, S2AL is rearranged via a Mg-dependent methyl migration to produce 3-hydroxy-3-methyl-2-ketobutyrate (HMKB). In the reductase reaction, this 2-ketoacid undergoes a metal-dependent reduction by NADPH to yield (R)-2,3-dihydroxy-isovalerate. This Cutibacterium acnes (strain DSM 16379 / KPA171202) (Propionibacterium acnes) protein is Ketol-acid reductoisomerase (NADP(+)).